The following is a 137-amino-acid chain: Large ribosomal subunit protein uL16 (137 aa).

The protein belongs to the universal ribosomal protein uL16 family. As to quaternary structure, part of the 50S ribosomal subunit.

Functionally, binds 23S rRNA and is also seen to make contacts with the A and possibly P site tRNAs. The protein is Large ribosomal subunit protein uL16 of Beijerinckia indica subsp. indica (strain ATCC 9039 / DSM 1715 / NCIMB 8712).